Consider the following 807-residue polypeptide: Sucrose synthase 2 (807 aa).

The segment at 274–752 (MVFNVVILSP…GLKRIYERYT (479 aa)) is GT-B glycosyltransferase.

The protein belongs to the glycosyltransferase 1 family. Plant sucrose synthase subfamily. In terms of tissue distribution, detected in the whole plant but at lower levels. Predominantly expressed in developing siliques. Also detected in the root tip. Detected in the embryo, endosperm and seed coat (at the protein level).

The protein resides in the cytoplasm. It localises to the plastid membrane. It catalyses the reaction an NDP-alpha-D-glucose + D-fructose = a ribonucleoside 5'-diphosphate + sucrose + H(+). Its function is as follows. Sucrose-cleaving enzyme that provides UDP-glucose and fructose for various metabolic pathways. Modulates metabolic homeostasis and directs carbon towards starch synthesis in developing seeds. The sequence is that of Sucrose synthase 2 (SUS2) from Arabidopsis thaliana (Mouse-ear cress).